The sequence spans 233 residues: Small ribosomal subunit protein uS3 (233 aa).

The region spanning 39–107 (VREFLKKRLG…PVHVNIEEVR (69 aa)) is the KH type-2 domain. The interval 212-233 (VQATPAAPEKKMRKGARNAAAN) is disordered.

It belongs to the universal ribosomal protein uS3 family. As to quaternary structure, part of the 30S ribosomal subunit. Forms a tight complex with proteins S10 and S14.

Functionally, binds the lower part of the 30S subunit head. Binds mRNA in the 70S ribosome, positioning it for translation. The polypeptide is Small ribosomal subunit protein uS3 (Chromobacterium violaceum (strain ATCC 12472 / DSM 30191 / JCM 1249 / CCUG 213 / NBRC 12614 / NCIMB 9131 / NCTC 9757 / MK)).